A 197-amino-acid chain; its full sequence is Holliday junction branch migration complex subunit RuvA (197 aa).

A domain I region spans residues 1–64 (MIARLAGKVA…QDAIELYGFA (64 aa)). The segment at 65–141 (SEDEEAVFRA…LALLARAAGP (77 aa)) is domain II. The interval 141–145 (PARAK) is flexible linker. Positions 146–197 (PGAGVVEQLRQALVNLGYKPPQADAAADALRDEAEGKKLDELLREALKRLRG) are domain III.

It belongs to the RuvA family. In terms of assembly, homotetramer. Forms an RuvA(8)-RuvB(12)-Holliday junction (HJ) complex. HJ DNA is sandwiched between 2 RuvA tetramers; dsDNA enters through RuvA and exits via RuvB. An RuvB hexamer assembles on each DNA strand where it exits the tetramer. Each RuvB hexamer is contacted by two RuvA subunits (via domain III) on 2 adjacent RuvB subunits; this complex drives branch migration. In the full resolvosome a probable DNA-RuvA(4)-RuvB(12)-RuvC(2) complex forms which resolves the HJ.

It is found in the cytoplasm. In terms of biological role, the RuvA-RuvB-RuvC complex processes Holliday junction (HJ) DNA during genetic recombination and DNA repair, while the RuvA-RuvB complex plays an important role in the rescue of blocked DNA replication forks via replication fork reversal (RFR). RuvA specifically binds to HJ cruciform DNA, conferring on it an open structure. The RuvB hexamer acts as an ATP-dependent pump, pulling dsDNA into and through the RuvAB complex. HJ branch migration allows RuvC to scan DNA until it finds its consensus sequence, where it cleaves and resolves the cruciform DNA. This is Holliday junction branch migration complex subunit RuvA from Anaeromyxobacter sp. (strain Fw109-5).